Here is a 142-residue protein sequence, read N- to C-terminus: Hemoglobin A subunit alpha-2 (142 aa).

In terms of domain architecture, Globin spans 2 to 142; it reads VLTAGDKANV…VAQNLTSKYR (141 aa). H59 lines the O2 pocket. Residue H88 participates in heme b binding.

The protein belongs to the globin family. As to quaternary structure, tetramer of alpha-1, alpha-2 and two identical beta chains. As to expression, red blood cells.

Its function is as follows. Involved in oxygen transport from the lung to the various peripheral tissues. In Aldabrachelys gigantea (Aldabra giant tortoise), this protein is Hemoglobin A subunit alpha-2.